Here is a 323-residue protein sequence, read N- to C-terminus: Probable inactive poly [ADP-ribose] polymerase SRO2 (323 aa).

The 227-residue stretch at 31 to 257 (SSVSHAGSSF…FASRPSSPWV (227 aa)) folds into the PARP catalytic domain. The RST domain occupies 250 to 321 (SRPSSPWVSF…IKNHKNRNKV (72 aa)).

Interacts with STO.

It localises to the nucleus. Functionally, probable inactive ADP-ribosyltransferase that may be involved in stress and developmental responses. This is Probable inactive poly [ADP-ribose] polymerase SRO2 (SRO2) from Arabidopsis thaliana (Mouse-ear cress).